The sequence spans 360 residues: Photosystem II protein D1 (360 aa).

The Cytoplasmic segment spans residues 1–28; sequence MTTTLQRRESANLWERFCNWVTSTDNRL. Residues 29–46 form a helical membrane-spanning segment; that stretch reads YVGWFGVIMIPTLLAATI. Topologically, residues 47–117 are lumenal; sequence CFVIAFIAAP…NGGPYQLIIF (71 aa). His118 is a binding site for chlorophyll a. A helical membrane pass occupies residues 118–133; sequence HFLLGASCYMGRQWEL. Pheophytin a contacts are provided by Tyr126 and Gln130. Topologically, residues 134–141 are cytoplasmic; sequence SYRLGMRP. A helical membrane pass occupies residues 142–156; that stretch reads WICVAYSAPLASAFA. Tyr147 is a binding site for pheophytin a. At 157–196 the chain is on the lumenal side; that stretch reads VFLIYPIGQGSFSDGMPLGISGTFNFMIVFQAEHNILMHP. The [CaMn4O5] cluster site is built by Asp170 and Glu189. Residues 197–218 form a helical membrane-spanning segment; it reads FHQLGVAGVFGGALFCAMHGSL. His198 provides a ligand contact to chlorophyll a. A pheophytin a-binding site is contributed by Met214. A quinone-binding positions include His215 and 264-265; that span reads SF. Position 215 (His215) interacts with Fe cation. Topologically, residues 219 to 273 are cytoplasmic; it reads VTSSLIRETTETESANYGYKFGQEEETYNIVAAHGYFGRLIFQYASFNNSRSLHF. Residue His272 coordinates Fe cation. The chain crosses the membrane as a helical span at residues 274–288; the sequence is FLAAWRVVGVWFAAL. At 289 to 360 the chain is on the lumenal side; it reads GISTMAFNLN…VAMIAPSING (72 aa). [CaMn4O5] cluster is bound by residues His332, Glu333, Asp342, and Ala344. Positions 345–360 are excised as a propeptide; sequence SAESAPVAMIAPSING.

It belongs to the reaction center PufL/M/PsbA/D family. PSII is composed of 1 copy each of membrane proteins PsbA, PsbB, PsbC, PsbD, PsbE, PsbF, PsbH, PsbI, PsbJ, PsbK, PsbL, PsbM, PsbT, PsbX, PsbY, PsbZ, Psb30/Ycf12, peripheral proteins PsbO, CyanoQ (PsbQ), PsbU, PsbV and a large number of cofactors. It forms dimeric complexes. The cofactor is The D1/D2 heterodimer binds P680, chlorophylls that are the primary electron donor of PSII, and subsequent electron acceptors. It shares a non-heme iron and each subunit binds pheophytin, quinone, additional chlorophylls, carotenoids and lipids. D1 provides most of the ligands for the Mn4-Ca-O5 cluster of the oxygen-evolving complex (OEC). There is also a Cl(-1) ion associated with D1 and D2, which is required for oxygen evolution. The PSII complex binds additional chlorophylls, carotenoids and specific lipids.. Post-translationally, C-terminally processed by CtpA; processing is essential to allow assembly of the oxygen-evolving complex and thus photosynthetic growth. Tyr-161 forms a radical intermediate that is referred to as redox-active TyrZ, YZ or Y-Z.

It localises to the cellular thylakoid membrane. It carries out the reaction 2 a plastoquinone + 4 hnu + 2 H2O = 2 a plastoquinol + O2. Its function is as follows. Photosystem II (PSII) is a light-driven water:plastoquinone oxidoreductase that uses light energy to abstract electrons from H(2)O, generating O(2) and a proton gradient subsequently used for ATP formation. It consists of a core antenna complex that captures photons, and an electron transfer chain that converts photonic excitation into a charge separation. The D1/D2 (PsbA/PsbD) reaction center heterodimer binds P680, the primary electron donor of PSII as well as several subsequent electron acceptors. The polypeptide is Photosystem II protein D1 (Thermostichus vulcanus (Synechococcus vulcanus)).